A 358-amino-acid chain; its full sequence is Malate dehydrogenase 2, glyoxysomal (358 aa).

A glyoxysome-targeting transit peptide spans 1–38 (MEFRGDANKRIAMISAHLQPSFTPQMEAKNSVMGRENC). NAD(+)-binding positions include 53–59 (GAAGGIG) and Asp-79. Substrate-binding residues include Arg-126 and Arg-132. NAD(+)-binding positions include Asn-139 and 162–164 (ISN). Asn-164 and Arg-198 together coordinate substrate. Catalysis depends on His-222, which acts as the Proton acceptor. Met-273 serves as a coordination point for NAD(+).

This sequence belongs to the LDH/MDH superfamily. MDH type 1 family. In terms of assembly, homodimer.

It localises to the glyoxysome. The catalysed reaction is (S)-malate + NAD(+) = oxaloacetate + NADH + H(+). The sequence is that of Malate dehydrogenase 2, glyoxysomal (MDH2) from Brassica napus (Rape).